The following is a 208-amino-acid chain: Uracil phosphoribosyltransferase (208 aa).

5-phospho-alpha-D-ribose 1-diphosphate contacts are provided by residues Arg-78, Arg-103, and 130-138 (DPMLATGGS). Uracil contacts are provided by residues Ile-193 and 198–200 (GDA). Asp-199 is a binding site for 5-phospho-alpha-D-ribose 1-diphosphate.

This sequence belongs to the UPRTase family. Requires Mg(2+) as cofactor.

It catalyses the reaction UMP + diphosphate = 5-phospho-alpha-D-ribose 1-diphosphate + uracil. It functions in the pathway pyrimidine metabolism; UMP biosynthesis via salvage pathway; UMP from uracil: step 1/1. Its activity is regulated as follows. Allosterically activated by GTP. Functionally, catalyzes the conversion of uracil and 5-phospho-alpha-D-ribose 1-diphosphate (PRPP) to UMP and diphosphate. This is Uracil phosphoribosyltransferase from Haemophilus influenzae (strain PittEE).